The sequence spans 287 residues: ATP synthase gamma chain (287 aa).

It belongs to the ATPase gamma chain family. In terms of assembly, F-type ATPases have 2 components, CF(1) - the catalytic core - and CF(0) - the membrane proton channel. CF(1) has five subunits: alpha(3), beta(3), gamma(1), delta(1), epsilon(1). CF(0) has three main subunits: a, b and c.

It localises to the cell inner membrane. Its function is as follows. Produces ATP from ADP in the presence of a proton gradient across the membrane. The gamma chain is believed to be important in regulating ATPase activity and the flow of protons through the CF(0) complex. In Geobacter sp. (strain M21), this protein is ATP synthase gamma chain.